Here is a 259-residue protein sequence, read N- to C-terminus: Ribonuclease HII (259 aa).

One can recognise an RNase H type-2 domain in the interval 70 to 258; it reads TLIVGIDEVG…VKSLVLGKKE (189 aa). A divalent metal cation is bound by residues aspartate 76, glutamate 77, and aspartate 168.

This sequence belongs to the RNase HII family. It depends on Mn(2+) as a cofactor. Mg(2+) is required as a cofactor.

It is found in the cytoplasm. The enzyme catalyses Endonucleolytic cleavage to 5'-phosphomonoester.. Functionally, endonuclease that specifically degrades the RNA of RNA-DNA hybrids. This is Ribonuclease HII from Streptococcus pneumoniae serotype 2 (strain D39 / NCTC 7466).